Here is an 88-residue protein sequence, read N- to C-terminus: uncharacterized protein (88 aa).

In terms of tissue distribution, expressed in a wide variety of tissues.

This is an uncharacterized protein from Homo sapiens (Human).